Here is a 430-residue protein sequence, read N- to C-terminus: Dihydrolipoyllysine-residue acetyltransferase component of pyruvate dehydrogenase complex (430 aa).

The region spanning 2–77 is the Lipoyl-binding domain; that stretch reads AFEFRLPDIG…VVGDVIVKID (76 aa). At Lys43 the chain carries N6-lipoyllysine. The tract at residues 80 to 122 is disordered; sequence DAEDMQFKGHDDDSSSKEEPAKEEAPAEQAPVATQTEEVDENR. Residues 84–104 show a composition bias toward basic and acidic residues; that stretch reads MQFKGHDDDSSSKEEPAKEEA. A Peripheral subunit-binding (PSBD) domain is found at 125–162; that stretch reads KAMPSVRKYAREKGVNIKAVSGSGKNGRITKEDVDAYL. Residues 164 to 200 are disordered; that stretch reads GGAPTASNESADSATNEEVAETPAAPAAVSLEGDFPE. The span at 177 to 192 shows a compositional bias: low complexity; the sequence is ATNEEVAETPAAPAAV. His401 is a catalytic residue.

The protein belongs to the 2-oxoacid dehydrogenase family. In terms of assembly, forms a 24-polypeptide structural core with octahedral symmetry. (R)-lipoate serves as cofactor.

It carries out the reaction N(6)-[(R)-dihydrolipoyl]-L-lysyl-[protein] + acetyl-CoA = N(6)-[(R)-S(8)-acetyldihydrolipoyl]-L-lysyl-[protein] + CoA. In terms of biological role, the pyruvate dehydrogenase complex catalyzes the overall conversion of pyruvate to acetyl-CoA and CO(2). It contains multiple copies of three enzymatic components: pyruvate dehydrogenase (E1), dihydrolipoamide acetyltransferase (E2) and lipoamide dehydrogenase (E3). This chain is Dihydrolipoyllysine-residue acetyltransferase component of pyruvate dehydrogenase complex (pdhC), found in Staphylococcus aureus.